Reading from the N-terminus, the 564-residue chain is Dihydroxy-acid dehydratase (564 aa).

[2Fe-2S] cluster is bound at residue cysteine 53. Residue aspartate 85 participates in Mg(2+) binding. Cysteine 126 lines the [2Fe-2S] cluster pocket. Residues aspartate 127 and lysine 128 each coordinate Mg(2+). N6-carboxylysine is present on lysine 128. Cysteine 203 contributes to the [2Fe-2S] cluster binding site. Residue glutamate 454 participates in Mg(2+) binding. Serine 480 (proton acceptor) is an active-site residue.

Belongs to the IlvD/Edd family. As to quaternary structure, homodimer. It depends on [2Fe-2S] cluster as a cofactor. Mg(2+) serves as cofactor.

It catalyses the reaction (2R)-2,3-dihydroxy-3-methylbutanoate = 3-methyl-2-oxobutanoate + H2O. The catalysed reaction is (2R,3R)-2,3-dihydroxy-3-methylpentanoate = (S)-3-methyl-2-oxopentanoate + H2O. It participates in amino-acid biosynthesis; L-isoleucine biosynthesis; L-isoleucine from 2-oxobutanoate: step 3/4. It functions in the pathway amino-acid biosynthesis; L-valine biosynthesis; L-valine from pyruvate: step 3/4. In terms of biological role, functions in the biosynthesis of branched-chain amino acids. Catalyzes the dehydration of (2R,3R)-2,3-dihydroxy-3-methylpentanoate (2,3-dihydroxy-3-methylvalerate) into 2-oxo-3-methylpentanoate (2-oxo-3-methylvalerate) and of (2R)-2,3-dihydroxy-3-methylbutanoate (2,3-dihydroxyisovalerate) into 2-oxo-3-methylbutanoate (2-oxoisovalerate), the penultimate precursor to L-isoleucine and L-valine, respectively. In Leifsonia xyli subsp. xyli (strain CTCB07), this protein is Dihydroxy-acid dehydratase.